Here is a 354-residue protein sequence, read N- to C-terminus: MKILTIIGARPQFIKASVVSKAIIEQQTLSEIIVHTGQHFDANMSEIFFEQLGIPKPDYQLDIHGGTHGQMTGRMLMEIEDVILKEKPHRVLVYGDTNSTLAGALAASKLHVPIAHIEAGLRSFNMRMPEEINRILTDQVSDILFCPTRVAIDNLKNEGFERKAAKIVNVGDVMQDSALFFAQRATSPIGLASQDGFILATLHRAENTDDPVRLTSIVEALNEIQINVAPVVLPLHPRTRGVIERLGLKLEVQVIDPVGYLEMIWLLQRSGLVLTDSGGVQKEAFFFGKPCVTMRDQTEWVELVTCGANVLVGAARDMIVESARTSLGKTIQDDGQLYGGGQASSRIAEYLAKL.

Belongs to the UDP-N-acetylglucosamine 2-epimerase family.

It catalyses the reaction UDP-2,3-diacetamido-2,3-dideoxy-alpha-D-glucuronate = UDP-2,3-diacetamido-2,3-dideoxy-alpha-D-mannuronate. It functions in the pathway bacterial outer membrane biogenesis; LPS O-antigen biosynthesis. Plays a role in the biosynthesis of B-band O antigen for serotype O5. Catalyzes the epimerization of UDP-2,3-diacetamido-2,3-dideoxy-alpha-D-glucuronic acid (UDP-alpha-D-GlcNAc3NAcA) to UDP-2,3-diacetamido-2,3-dideoxy-alpha-D-mannuronic acid (UDP-alpha-D-ManNAc3NAcA). Exhibits high specificity towards the substrate as UDP-alpha-D-GlcNAc, UDP-alpha-D-GlcNAcA (UDP-2-acetamido-2-deoxy-alpha-D-glucuronic acid) and UDP-alpha-D-GlcNAc3NAc (UDP-2,3-diacetamido-2,3-dideoxy-alpha-D-glucose) cannot act as substrates. The chain is UDP-2,3-diacetamido-2,3-dideoxy-D-glucuronate 2-epimerase from Pseudomonas aeruginosa (strain ATCC 15692 / DSM 22644 / CIP 104116 / JCM 14847 / LMG 12228 / 1C / PRS 101 / PAO1).